Consider the following 402-residue polypeptide: Subtilisin-like protease 9 (402 aa).

The first 18 residues, 1–18 (MGFFRILFSLSLCALSLA), serve as a signal peptide directing secretion. The propeptide occupies 19 to 120 (IPSKLIGLEN…VEVDRVVKLD (102 aa)). Positions 36 to 119 (SYIVVMKSAV…YVEVDRVVKL (84 aa)) constitute an Inhibitor I9 domain. The Peptidase S8 domain occupies 130–402 (SWGLGRISHR…KKLLYNGSGA (273 aa)). Catalysis depends on charge relay system residues Asp162 and His193. Residue Asn254 is glycosylated (N-linked (GlcNAc...) asparagine). Ser348 acts as the Charge relay system in catalysis. N-linked (GlcNAc...) asparagine glycans are attached at residues Asn390 and Asn398.

The protein belongs to the peptidase S8 family.

The protein localises to the secreted. In terms of biological role, secreted subtilisin-like serine protease with keratinolytic activity that contributes to pathogenicity. The sequence is that of Subtilisin-like protease 9 (SUB9) from Arthroderma gypseum (strain ATCC MYA-4604 / CBS 118893) (Microsporum gypseum).